Consider the following 65-residue polypeptide: Large ribosomal subunit protein bL35 (65 aa).

The disordered stretch occupies residues 1–29 (MPKMKTNRGAAKRFKKTGSGRIKRGKAFT). Residues 10–26 (AAKRFKKTGSGRIKRGK) show a composition bias toward basic residues.

Belongs to the bacterial ribosomal protein bL35 family.

The chain is Large ribosomal subunit protein bL35 from Desulfotalea psychrophila (strain LSv54 / DSM 12343).